The chain runs to 357 residues: Phenylalanine--tRNA ligase alpha subunit (357 aa).

Residue E278 coordinates Mg(2+).

Belongs to the class-II aminoacyl-tRNA synthetase family. Phe-tRNA synthetase alpha subunit type 1 subfamily. As to quaternary structure, tetramer of two alpha and two beta subunits. Mg(2+) is required as a cofactor.

The protein localises to the cytoplasm. It catalyses the reaction tRNA(Phe) + L-phenylalanine + ATP = L-phenylalanyl-tRNA(Phe) + AMP + diphosphate + H(+). This Albidiferax ferrireducens (strain ATCC BAA-621 / DSM 15236 / T118) (Rhodoferax ferrireducens) protein is Phenylalanine--tRNA ligase alpha subunit.